Reading from the N-terminus, the 192-residue chain is Small ribosomal subunit protein uS5 (192 aa).

A disordered region spans residues 1-21 (MAAERERGGRERGGRDRDERD). The S5 DRBM domain maps to 24 to 87 (FVDKLVHINR…DSAKRNLTRV (64 aa)).

Belongs to the universal ribosomal protein uS5 family. In terms of assembly, part of the 30S ribosomal subunit. Contacts proteins S4 and S8.

With S4 and S12 plays an important role in translational accuracy. In terms of biological role, located at the back of the 30S subunit body where it stabilizes the conformation of the head with respect to the body. In Afipia carboxidovorans (strain ATCC 49405 / DSM 1227 / KCTC 32145 / OM5) (Oligotropha carboxidovorans), this protein is Small ribosomal subunit protein uS5.